The sequence spans 117 residues: Large ribosomal subunit protein bL20 (117 aa).

Belongs to the bacterial ribosomal protein bL20 family.

Functionally, binds directly to 23S ribosomal RNA and is necessary for the in vitro assembly process of the 50S ribosomal subunit. It is not involved in the protein synthesizing functions of that subunit. This chain is Large ribosomal subunit protein bL20, found in Mesomycoplasma hyopneumoniae (strain 7448) (Mycoplasma hyopneumoniae).